We begin with the raw amino-acid sequence, 317 residues long: Beta-ketoacyl-[acyl-carrier-protein] synthase III (317 aa).

Catalysis depends on residues Cys112 and His244. Residues 245 to 249 (QANIR) form an ACP-binding region. Residue Asn274 is part of the active site.

This sequence belongs to the thiolase-like superfamily. FabH family. In terms of assembly, homodimer.

The protein resides in the cytoplasm. The enzyme catalyses malonyl-[ACP] + acetyl-CoA + H(+) = 3-oxobutanoyl-[ACP] + CO2 + CoA. Its pathway is lipid metabolism; fatty acid biosynthesis. In terms of biological role, catalyzes the condensation reaction of fatty acid synthesis by the addition to an acyl acceptor of two carbons from malonyl-ACP. Catalyzes the first condensation reaction which initiates fatty acid synthesis and may therefore play a role in governing the total rate of fatty acid production. Possesses both acetoacetyl-ACP synthase and acetyl transacylase activities. Its substrate specificity determines the biosynthesis of branched-chain and/or straight-chain of fatty acids. This chain is Beta-ketoacyl-[acyl-carrier-protein] synthase III, found in Rickettsia akari (strain Hartford).